We begin with the raw amino-acid sequence, 399 residues long: Elongation factor Tu (399 aa).

In terms of domain architecture, tr-type G spans 10–204 (KPHVNIGTIG…AVDASIPEPE (195 aa)). The interval 19 to 26 (GHVDHGKT) is G1. Position 19-26 (19-26 (GHVDHGKT)) interacts with GTP. Residue threonine 26 coordinates Mg(2+). The segment at 60-64 (GITIN) is G2. Residues 81 to 84 (DCPG) are G3. Residues 81 to 85 (DCPGH) and 136 to 139 (NKCD) contribute to the GTP site. The interval 136–139 (NKCD) is G4. A G5 region spans residues 174 to 176 (SGL).

The protein belongs to the TRAFAC class translation factor GTPase superfamily. Classic translation factor GTPase family. EF-Tu/EF-1A subfamily. Monomer.

It is found in the cytoplasm. The enzyme catalyses GTP + H2O = GDP + phosphate + H(+). In terms of biological role, GTP hydrolase that promotes the GTP-dependent binding of aminoacyl-tRNA to the A-site of ribosomes during protein biosynthesis. This Prochlorococcus marinus (strain NATL1A) protein is Elongation factor Tu.